We begin with the raw amino-acid sequence, 733 residues long: 1,4-alpha-glucan branching enzyme GlgB (733 aa).

The Nucleophile role is filled by D413. E466 acts as the Proton donor in catalysis.

This sequence belongs to the glycosyl hydrolase 13 family. GlgB subfamily. Monomer.

It catalyses the reaction Transfers a segment of a (1-&gt;4)-alpha-D-glucan chain to a primary hydroxy group in a similar glucan chain.. It functions in the pathway glycan biosynthesis; glycogen biosynthesis. Its function is as follows. Catalyzes the formation of the alpha-1,6-glucosidic linkages in glycogen by scission of a 1,4-alpha-linked oligosaccharide from growing alpha-1,4-glucan chains and the subsequent attachment of the oligosaccharide to the alpha-1,6 position. This Leifsonia xyli subsp. xyli (strain CTCB07) protein is 1,4-alpha-glucan branching enzyme GlgB.